The following is a 37-amino-acid chain: Cytochrome b6-f complex subunit 5 (37 aa).

A helical membrane pass occupies residues 5–25 (LLSGIVLGLVPITITGLLVTA).

Belongs to the PetG family. As to quaternary structure, the 4 large subunits of the cytochrome b6-f complex are cytochrome b6, subunit IV (17 kDa polypeptide, PetD), cytochrome f and the Rieske protein, while the 4 small subunits are PetG, PetL, PetM and PetN. The complex functions as a dimer.

The protein resides in the plastid. It localises to the chloroplast thylakoid membrane. Functionally, component of the cytochrome b6-f complex, which mediates electron transfer between photosystem II (PSII) and photosystem I (PSI), cyclic electron flow around PSI, and state transitions. PetG is required for either the stability or assembly of the cytochrome b6-f complex. The polypeptide is Cytochrome b6-f complex subunit 5 (Tupiella akineta (Green alga)).